A 697-amino-acid chain; its full sequence is Portal protein (697 aa).

A disordered region spans residues 633 to 697; the sequence is MSREAAGGVP…RRAGGPYGFH (65 aa). The span at 664 to 689 shows a compositional bias: basic and acidic residues; sequence ITADEERRGPERVGRFRNGGPDDPRR.

Belongs to the herpesviridae portal protein family. In terms of assembly, homododecamerizes. Interacts with terminase subunits TRM1 and TRM3.

The protein localises to the virion. The protein resides in the host nucleus. Functionally, forms a portal in the viral capsid through which viral DNA is translocated during DNA packaging. Assembles as a dodecamer at a single fivefold axe of the T=16 icosahedric capsid. Binds to the molecular motor that translocates the viral DNA, termed terminase. The protein is Portal protein (UL104) of Homo sapiens (Human).